A 493-amino-acid polypeptide reads, in one-letter code: Accumulates dyads protein 4 (493 aa).

Interacts with CNM67, SPO21/MPC70 and NUD1.

The protein localises to the cytoplasm. Its subcellular location is the cytoskeleton. It is found in the microtubule organizing center. The protein resides in the spindle pole body. Functionally, involved in the pathway that organizes the shaping and sizing of the prospore membrane (PSM) during sporulation. May be required to stabilize the outer plaque of the spindle pole body (SPB). This Saccharomyces cerevisiae (strain ATCC 204508 / S288c) (Baker's yeast) protein is Accumulates dyads protein 4 (ADY4).